A 795-amino-acid chain; its full sequence is Phenylalanine--tRNA ligase beta subunit (795 aa).

Positions A39 to R148 constitute a tRNA-binding domain. Positions P401–N476 constitute a B5 domain. Residues D454, D460, E463, and E464 each coordinate Mg(2+). An FDX-ACB domain is found at S701–R794.

The protein belongs to the phenylalanyl-tRNA synthetase beta subunit family. Type 1 subfamily. As to quaternary structure, tetramer of two alpha and two beta subunits. Mg(2+) is required as a cofactor.

It localises to the cytoplasm. The enzyme catalyses tRNA(Phe) + L-phenylalanine + ATP = L-phenylalanyl-tRNA(Phe) + AMP + diphosphate + H(+). The protein is Phenylalanine--tRNA ligase beta subunit (pheT) of Haemophilus influenzae (strain ATCC 51907 / DSM 11121 / KW20 / Rd).